A 190-amino-acid polypeptide reads, in one-letter code: Molybdenum cofactor guanylyltransferase (190 aa).

GTP contacts are provided by residues 8–10 (LAG), Lys-20, Asp-64, and Asp-98. Asp-98 is a binding site for Mg(2+).

The protein belongs to the MobA family. In terms of assembly, monomer. Mg(2+) is required as a cofactor.

It localises to the cytoplasm. It catalyses the reaction Mo-molybdopterin + GTP + H(+) = Mo-molybdopterin guanine dinucleotide + diphosphate. Functionally, transfers a GMP moiety from GTP to Mo-molybdopterin (Mo-MPT) cofactor (Moco or molybdenum cofactor) to form Mo-molybdopterin guanine dinucleotide (Mo-MGD) cofactor. In Rhodobacter capsulatus (Rhodopseudomonas capsulata), this protein is Molybdenum cofactor guanylyltransferase.